The sequence spans 320 residues: Aspartate carbamoyltransferase catalytic subunit (320 aa).

Residues R57 and T58 each coordinate carbamoyl phosphate. K85 is an L-aspartate binding site. Carbamoyl phosphate is bound by residues R107, H141, and Q144. Residues R174 and R228 each contribute to the L-aspartate site. Residues G269 and P270 each contribute to the carbamoyl phosphate site.

It belongs to the aspartate/ornithine carbamoyltransferase superfamily. ATCase family. In terms of assembly, heterododecamer (2C3:3R2) of six catalytic PyrB chains organized as two trimers (C3), and six regulatory PyrI chains organized as three dimers (R2).

The enzyme catalyses carbamoyl phosphate + L-aspartate = N-carbamoyl-L-aspartate + phosphate + H(+). It participates in pyrimidine metabolism; UMP biosynthesis via de novo pathway; (S)-dihydroorotate from bicarbonate: step 2/3. Its function is as follows. Catalyzes the condensation of carbamoyl phosphate and aspartate to form carbamoyl aspartate and inorganic phosphate, the committed step in the de novo pyrimidine nucleotide biosynthesis pathway. The protein is Aspartate carbamoyltransferase catalytic subunit of Mycobacterium ulcerans (strain Agy99).